The following is a 156-amino-acid chain: Arginine repressor (156 aa).

This sequence belongs to the ArgR family.

Its subcellular location is the cytoplasm. It functions in the pathway amino-acid biosynthesis; L-arginine biosynthesis [regulation]. Its function is as follows. Regulates arginine biosynthesis genes. The protein is Arginine repressor of Escherichia coli O81 (strain ED1a).